Consider the following 522-residue polypeptide: Maturase K (522 aa).

It belongs to the intron maturase 2 family. MatK subfamily.

The protein resides in the plastid. Its subcellular location is the chloroplast. Its function is as follows. Usually encoded in the trnK tRNA gene intron. Probably assists in splicing its own and other chloroplast group II introns. This chain is Maturase K, found in Dianella ensifolia (Flax lily).